The chain runs to 137 residues: ATP synthase epsilon chain (137 aa).

Belongs to the ATPase epsilon chain family. F-type ATPases have 2 components, CF(1) - the catalytic core - and CF(0) - the membrane proton channel. CF(1) has five subunits: alpha(3), beta(3), gamma(1), delta(1), epsilon(1). CF(0) has three main subunits: a, b and c.

The protein localises to the cellular thylakoid membrane. Its function is as follows. Produces ATP from ADP in the presence of a proton gradient across the membrane. The polypeptide is ATP synthase epsilon chain (Trichodesmium erythraeum (strain IMS101)).